Here is a 570-residue protein sequence, read N- to C-terminus: PTS system lactose-specific EIICB component (570 aa).

Residues 9–410 enclose the PTS EIIC type-3 domain; that stretch reads IEKGKPFFEK…VVDIIIYYPF (402 aa). The next 9 membrane-spanning stretches (helical) occupy residues 31 to 51, 65 to 85, 104 to 124, 133 to 153, 178 to 198, 223 to 243, 283 to 303, 340 to 360, and 382 to 402; these read GFISAMPVILFSSIFLLIAYV, AILMKPYNYTMGLVAFLVAGT, INFISTMQAAMCGFLFLASDP, AFMGTKGLLTAFLSAFVTVIV, FKDLIPFSAVIIILYALDLVI, GWIGVTIIFGAFALFWFVGIH, MFIVTFGGTGATLVVPFMFMW, VFFIPFVLAPIVNVWIFKLFV, and IIMGTGFGLWSFVLAITLIVV. The PTS EIIB type-3 domain occupies 467-570; sequence QTNVLVLCAG…LDFVQQQFEN (104 aa). Cysteine 474 acts as the Phosphocysteine intermediate; for EIIB activity in catalysis. Position 474 is a phosphocysteine; by EIIA (cysteine 474).

It is found in the cell membrane. The catalysed reaction is lactose(out) + N(pros)-phospho-L-histidyl-[protein] = lactose 6-phosphate(in) + L-histidyl-[protein]. In terms of biological role, the phosphoenolpyruvate-dependent sugar phosphotransferase system (sugar PTS), a major carbohydrate active transport system, catalyzes the phosphorylation of incoming sugar substrates concomitantly with their translocation across the cell membrane. The enzyme II LacEF PTS system is involved in lactose transport, but can also use galactose, isopropyl beta-thio-galactopyranoside and thiomethyl beta-D-galactopyranoside (TMG) as substrates. This is PTS system lactose-specific EIICB component from Staphylococcus aureus.